Here is a 347-residue protein sequence, read N- to C-terminus: NADH-quinone oxidoreductase subunit H (347 aa).

Transmembrane regions (helical) follow at residues leucine 13–leucine 33, proline 50–phenylalanine 70, glycine 82–isoleucine 102, valine 115–glycine 135, isoleucine 161–valine 181, phenylalanine 198–leucine 218, phenylalanine 248–valine 268, valine 286–valine 306, and valine 325–glycine 345.

Belongs to the complex I subunit 1 family. As to quaternary structure, NDH-1 is composed of 14 different subunits. Subunits NuoA, H, J, K, L, M, N constitute the membrane sector of the complex.

It is found in the cell inner membrane. It carries out the reaction a quinone + NADH + 5 H(+)(in) = a quinol + NAD(+) + 4 H(+)(out). Its function is as follows. NDH-1 shuttles electrons from NADH, via FMN and iron-sulfur (Fe-S) centers, to quinones in the respiratory chain. The immediate electron acceptor for the enzyme in this species is believed to be ubiquinone. Couples the redox reaction to proton translocation (for every two electrons transferred, four hydrogen ions are translocated across the cytoplasmic membrane), and thus conserves the redox energy in a proton gradient. This subunit may bind ubiquinone. This Brucella abortus (strain 2308) protein is NADH-quinone oxidoreductase subunit H.